The sequence spans 465 residues: ATP synthase subunit beta (465 aa).

151-158 serves as a coordination point for ATP; sequence GGAGVGKT.

Belongs to the ATPase alpha/beta chains family. As to quaternary structure, F-type ATPases have 2 components, CF(1) - the catalytic core - and CF(0) - the membrane proton channel. CF(1) has five subunits: alpha(3), beta(3), gamma(1), delta(1), epsilon(1). CF(0) has four main subunits: a(1), b(1), b'(1) and c(9-12).

It localises to the cell inner membrane. It carries out the reaction ATP + H2O + 4 H(+)(in) = ADP + phosphate + 5 H(+)(out). In terms of biological role, produces ATP from ADP in the presence of a proton gradient across the membrane. The catalytic sites are hosted primarily by the beta subunits. The protein is ATP synthase subunit beta of Chloroherpeton thalassium (strain ATCC 35110 / GB-78).